The primary structure comprises 73 residues: Tetrahydromethanopterin S-methyltransferase subunit G (73 aa).

The helical transmembrane segment at I48–S68 threads the bilayer.

This sequence belongs to the MtrG family. In terms of assembly, the complex is composed of 8 subunits; MtrA, MtrB, MtrC, MtrD, MtrE, MtrF, MtrG and MtrH.

It localises to the cell membrane. It carries out the reaction 5-methyl-5,6,7,8-tetrahydromethanopterin + coenzyme M + 2 Na(+)(in) = 5,6,7,8-tetrahydromethanopterin + methyl-coenzyme M + 2 Na(+)(out). The protein operates within one-carbon metabolism; methanogenesis from CO(2); methyl-coenzyme M from 5,10-methylene-5,6,7,8-tetrahydromethanopterin: step 2/2. Its function is as follows. Part of a complex that catalyzes the formation of methyl-coenzyme M and tetrahydromethanopterin from coenzyme M and methyl-tetrahydromethanopterin. This is an energy-conserving, sodium-ion translocating step. The sequence is that of Tetrahydromethanopterin S-methyltransferase subunit G from Methanosarcina acetivorans (strain ATCC 35395 / DSM 2834 / JCM 12185 / C2A).